The chain runs to 102 residues: Small ribosomal subunit protein uS10 (102 aa).

Belongs to the universal ribosomal protein uS10 family. As to quaternary structure, part of the 30S ribosomal subunit.

Its function is as follows. Involved in the binding of tRNA to the ribosomes. The polypeptide is Small ribosomal subunit protein uS10 (Desulforamulus reducens (strain ATCC BAA-1160 / DSM 100696 / MI-1) (Desulfotomaculum reducens)).